The sequence spans 406 residues: Argininosuccinate synthase (406 aa).

ATP is bound by residues 12–20 and Ala-39; that span reads AYSGGLDTS. The L-citrulline site is built by Tyr-90 and Ser-95. Position 120 (Gly-120) interacts with ATP. L-aspartate contacts are provided by Thr-122, Asn-126, and Asp-127. L-citrulline is bound at residue Asn-126. Residues Arg-130, Ser-179, Ser-188, Glu-264, and Tyr-276 each contribute to the L-citrulline site.

Belongs to the argininosuccinate synthase family. Type 1 subfamily. In terms of assembly, homotetramer.

The protein resides in the cytoplasm. It carries out the reaction L-citrulline + L-aspartate + ATP = 2-(N(omega)-L-arginino)succinate + AMP + diphosphate + H(+). It participates in amino-acid biosynthesis; L-arginine biosynthesis; L-arginine from L-ornithine and carbamoyl phosphate: step 2/3. The chain is Argininosuccinate synthase from Citrifermentans bemidjiense (strain ATCC BAA-1014 / DSM 16622 / JCM 12645 / Bem) (Geobacter bemidjiensis).